The sequence spans 305 residues: Homoserine kinase (305 aa).

ATP is bound at residue 90–100 (PLARGLGSSAS).

The protein belongs to the GHMP kinase family. Homoserine kinase subfamily.

Its subcellular location is the cytoplasm. The enzyme catalyses L-homoserine + ATP = O-phospho-L-homoserine + ADP + H(+). It participates in amino-acid biosynthesis; L-threonine biosynthesis; L-threonine from L-aspartate: step 4/5. Catalyzes the ATP-dependent phosphorylation of L-homoserine to L-homoserine phosphate. The protein is Homoserine kinase of Staphylococcus saprophyticus subsp. saprophyticus (strain ATCC 15305 / DSM 20229 / NCIMB 8711 / NCTC 7292 / S-41).